The following is a 100-amino-acid chain: Putative sodium channel toxin Ts26 (100 aa).

Residues 1–22 (MVKSAMKIVILILFVLLIRVES) form the signal peptide. One can recognise an LCN-type CS-alpha/beta domain in the interval 24–92 (RNGYPDISDG…VMDTTIEYCE (69 aa)). 4 disulfide bridges follow: C38-C64, C50-C69, C54-C71, and C65-C91.

It belongs to the long (4 C-C) scorpion toxin superfamily. Sodium channel inhibitor family. Expressed by the venom gland.

The protein localises to the secreted. Its function is as follows. Putative sodium channel toxin. This is Putative sodium channel toxin Ts26 from Tityus serrulatus (Brazilian scorpion).